Here is a 659-residue protein sequence, read N- to C-terminus: Threonine--tRNA ligase (659 aa).

Residues 1 to 60 enclose the TGS domain; it reads MTVYLPDGKPLELPEGATAKDVARALGEGWERRAVGAIVDGELYDLLKPLPQGAKVRLLT. Residues 252–552 form a catalytic region; that stretch reads DHRRLGRELE…LIEHFAGDFP (301 aa). Positions 349, 400, and 529 each coordinate Zn(2+).

This sequence belongs to the class-II aminoacyl-tRNA synthetase family. In terms of assembly, homodimer. It depends on Zn(2+) as a cofactor.

Its subcellular location is the cytoplasm. It catalyses the reaction tRNA(Thr) + L-threonine + ATP = L-threonyl-tRNA(Thr) + AMP + diphosphate + H(+). Its function is as follows. Catalyzes the attachment of threonine to tRNA(Thr) in a two-step reaction: L-threonine is first activated by ATP to form Thr-AMP and then transferred to the acceptor end of tRNA(Thr). Also edits incorrectly charged L-seryl-tRNA(Thr). The sequence is that of Threonine--tRNA ligase from Thermus thermophilus (strain ATCC BAA-163 / DSM 7039 / HB27).